Consider the following 339-residue polypeptide: Biotin synthase (339 aa).

The region spanning 53 to 271 is the Radical SAM core domain; the sequence is NAIQMSRLLS…IALARILMPR (219 aa). [4Fe-4S] cluster contacts are provided by Cys68, Cys72, and Cys75. Cys112, Cys143, Cys203, and Arg275 together coordinate [2Fe-2S] cluster.

It belongs to the radical SAM superfamily. Biotin synthase family. Homodimer. The cofactor is [4Fe-4S] cluster. [2Fe-2S] cluster serves as cofactor.

The catalysed reaction is (4R,5S)-dethiobiotin + (sulfur carrier)-SH + 2 reduced [2Fe-2S]-[ferredoxin] + 2 S-adenosyl-L-methionine = (sulfur carrier)-H + biotin + 2 5'-deoxyadenosine + 2 L-methionine + 2 oxidized [2Fe-2S]-[ferredoxin]. The protein operates within cofactor biosynthesis; biotin biosynthesis; biotin from 7,8-diaminononanoate: step 2/2. Its function is as follows. Catalyzes the conversion of dethiobiotin (DTB) to biotin by the insertion of a sulfur atom into dethiobiotin via a radical-based mechanism. This chain is Biotin synthase, found in Agrobacterium fabrum (strain C58 / ATCC 33970) (Agrobacterium tumefaciens (strain C58)).